A 3942-amino-acid polypeptide reads, in one-letter code: Protein bassoon (3942 aa).

The disordered stretch occupies residues 1–158 (MGNEASLEGG…PTSPYSVPQI (158 aa)). Residue Gly2 is the site of N-myristoyl glycine attachment. Residues 9–29 (GGAGEGPLPPGGSGLGPGPGA) are compositionally biased toward gly residues. Residues 31–52 (KPPSALAGGGQLPVAGAARAAG) are compositionally biased toward low complexity. The segment covering 53–71 (PPTPGLGPVPGPGPGPGPG) has biased composition (pro residues). The 5 X 2 AA tandem repeats of P-G stretch occupies residues 62 to 71 (PGPGPGPGPG). Polar residues-rich tracts occupy residues 85–98 (SQRTTSPTPKQASA) and 127–154 (QVDSRTQRSGRSPSVSPDRGSTPTSPYS). Ser142 carries the post-translational modification Phosphoserine. An Omega-N-methylarginine modification is found at Arg145. 2 C4-type zinc fingers span residues 167-190 (CPICKTSDLTSTPSQPNFNTCTQC) and 195-217 (CNQCGFNPNPHLTQVKEWLCLNC). 2 disordered regions span residues 228–341 (TTAP…EQTQ) and 362–457 (LMSV…KTMP). Over residues 230 to 240 (APRSKSQQQLH) the composition is skewed to polar residues. Phosphoserine occurs at positions 241 and 245. Polar residues predominate over residues 362–379 (LMSVQPEADTQGQPSPSK). Positions 395–407 (PRPPGSGPGPGPT) are enriched in pro residues. 2 consecutive C4-type zinc fingers follow at residues 464 to 487 (CPLCQAELNMGSRGPANYNTCTAC) and 492 to 514 (CNLCGFNPTPHLVEKTEWLCLNC). 4 disordered regions span residues 525–937 (GEPA…LQGG), 950–1258 (GSYG…VAES), 1309–1553 (MDPM…WQQS), and 1573–1625 (RMVH…PSAG). Positions 528–541 (APLPLPTPQQPPAG) are enriched in pro residues. Repeat copies occupy residues 570–576 (KASPQAT), 577–583 (KASPQAT), 584–590 (KASPQAT), 591–597 (KASPQTT), and 598–604 (KASPQAK). Positions 570-604 (KASPQATKASPQATKASPQATKASPQTTKASPQAK) are 5 X 7 AA tandem repeats of K-A-S-P-Q-[AT]-[AT]. Residues 573–600 (PQATKASPQATKASPQATKASPQTTKAS) are compositionally biased toward polar residues. A compositionally biased stretch (pro residues) spans 632–645 (VPKPPPETTVPPGT). The span at 684–693 (QDLSRSPQSL) shows a compositional bias: polar residues. Positions 694-708 (SDTGYSSDGVSSSQS) are enriched in low complexity. Over residues 709 to 718 (EITGVVQQEV) the composition is skewed to polar residues. 2 stretches are compositionally biased toward acidic residues: residues 787-802 (FDSDEELGDILEEDDS) and 865-876 (SAEEDNLEEDDT). The residue at position 881 (Arg881) is an Omega-N-methylarginine. A compositionally biased stretch (basic and acidic residues) spans 895–905 (PRPESSQEPKR). Residue Ser980 is modified to Phosphoserine. A compositionally biased stretch (low complexity) spans 994-1011 (PASTPSYTSGTSPTSLSS). The span at 1049–1062 (DSSEEEELREEEEL) shows a compositional bias: acidic residues. Ser1050 and Ser1051 each carry phosphoserine. Residues 1063–1076 (LREQEKMREVEQQR) show a composition bias toward basic and acidic residues. Ser1100 is modified (phosphoserine). Thr1102 is subject to Phosphothreonine. Residues Ser1108 and Ser1114 each carry the phosphoserine modification. Basic and acidic residues predominate over residues 1117–1132 (EELRQAAEMEELHRSS). 2 stretches are compositionally biased toward low complexity: residues 1133–1143 (CSEYSPSPSLD) and 1173–1190 (SPTETPSGSSTTPSSGRP). Over residues 1192 to 1207 (KSAEEAYEDMMRKAEM) the composition is skewed to basic and acidic residues. Residues 1209 to 1219 (QRQQGQVAGAR) are compositionally biased toward low complexity. Polar residues predominate over residues 1226–1240 (SQPTGPRSQGSFEYQ). Residue Ser1236 is modified to Phosphoserine. The segment covering 1333–1343 (SFSTSTSSDSS) has biased composition (low complexity). The O-linked (GlcNAc) threonine glycan is linked to Thr1354. Residues 1357 to 1366 (FAKEPQDPLK) show a composition bias toward basic and acidic residues. Polar residues predominate over residues 1370–1438 (SPVSSTLTSK…TTANYGSQTE (69 aa)). An O-linked (GlcNAc) threonine glycan is attached at Thr1395. 3 positions are modified to phosphoserine: Ser1482, Ser1491, and Ser1493. Positions 1488 to 1498 (STPSESPTFSP) are enriched in low complexity. Polar residues-rich tracts occupy residues 1508 to 1522 (EFSTQTPSLTLSSDI) and 1573 to 1609 (RMVHASASTSPLCSPTDSQPTSHSYSQTTPPSASQMP). A glycan (O-linked (GlcNAc) serine) is linked at Ser1707. Omega-N-methylarginine occurs at positions 1792 and 1796. Arg1806 is subject to Asymmetric dimethylarginine; alternate. Arg1806 carries the post-translational modification Omega-N-methylarginine; alternate. An Omega-N-methylarginine modification is found at Arg1818. Disordered regions lie at residues 1831–1865 (GVGLKPGPVPEPGAEPHRATPAELRSHAPPGTRKP) and 1926–1977 (PSAP…QRPY). The span at 1844-1856 (AEPHRATPAELRS) shows a compositional bias: basic and acidic residues. Thr1934 carries an O-linked (GlcNAc) threonine glycan. Phosphoserine occurs at positions 1990 and 2046. Omega-N-methylarginine occurs at positions 2051 and 2081. 3 positions are modified to asymmetric dimethylarginine: Arg2255, Arg2265, and Arg2270. O-linked (GlcNAc) threonine glycosylation is present at Thr2318. Disordered regions lie at residues 2327 to 2378 (PVAP…KQQE), 2476 to 2504 (EQKQRQKAPFPATCEAPSRGPPPAATELA), and 2524 to 2663 (TEGP…STTA). Positions 2329 to 2342 (APAPGPAPAPPPGQ) are enriched in pro residues. The segment covering 2361-2378 (ASEKEEASQEDRQRKQQE) has biased composition (basic and acidic residues). Coiled-coil stretches lie at residues 2366-2422 (EASQ…LVQR) and 2453-2483 (LAQQRLQLEQIQQLQQQLQLQLEEQKQRQKA). The O-linked (GlcNAc) threonine glycan is linked to Thr2524. A compositionally biased stretch (polar residues) spans 2541–2551 (SSASDMSLQTE). Position 2578 is a phosphoserine (Ser2578). Residues Thr2595 and Thr2622 each carry the phosphothreonine modification. Basic and acidic residues predominate over residues 2643–2655 (RHSDSGSDSKHDA). Thr2700 carries O-linked (GlcNAc) threonine glycosylation. The interval 2730 to 3278 (EPDGQAQGVA…GGVSGRPGKD (549 aa)) is interaction with DAO. Residues Ser2811, Ser2860, and Ser2866 each carry the phosphoserine modification. Residues 2854–2874 (TLQRSLSDPKPLSPTAEESAK) are disordered. O-linked (GlcNAc) threonine glycosylation occurs at Thr2945. At Ser3022 the chain carries Phosphoserine. Disordered stretches follow at residues 3051-3409 (PATP…LTSR), 3431-3560 (YYGV…PRAH), and 3581-3917 (EAYH…KILP). The segment covering 3073 to 3083 (TAGSSGPTQNG) has biased composition (polar residues). Over residues 3089–3114 (APTYTGPSTYPAPTYPPGTGYPAEPG) the composition is skewed to low complexity. Residues 3202–3211 (KAPEHPRGSD) are compositionally biased toward basic and acidic residues. A compositionally biased stretch (polar residues) spans 3212–3237 (RSSVSQSPAPTYPSDSHYTSLEQNVP). The residue at position 3301 (Ser3301) is a Phosphoserine. 2 stretches are compositionally biased toward basic and acidic residues: residues 3330 to 3342 (GDSDYRHGARADK) and 3372 to 3391 (QGMEQKISKFSPIEEAKDVE). Ser3382 is modified (phosphoserine). The segment covering 3447-3461 (YGSSSRSRMASAYSG) has biased composition (low complexity). Over residues 3464–3487 (LSSHDYSSRGKGYERERDTAERLQ) the composition is skewed to basic and acidic residues. Omega-N-methylarginine is present on Arg3502. Residues 3520-3534 (PLGRPRPAGGALPPG) are compositionally biased toward low complexity. Basic and acidic residues-rich tracts occupy residues 3549–3560 (VQEHVKDGPRAH) and 3592–3602 (WFDKPRDARSD). Basic residues predominate over residues 3652 to 3665 (EHRHHSDHGRHSGR). Residues 3666–3690 (HAGEEPGRRAAKPHARDMGRHEARP) show a composition bias toward basic and acidic residues. Residues 3750–3820 (TQAQPQMQGR…QARLQPQSQP (71 aa)) are compositionally biased toward low complexity. Arg3823 is modified (omega-N-methylarginine). The segment covering 3835 to 3851 (KPQPGPTTAPGPQPAGP) has biased composition (pro residues). A compositionally biased stretch (low complexity) spans 3856–3891 (QASSSKPPAAKAPQQGRAPQAQTTPGPGPAGAKPGA).

In terms of assembly, interacts with PCLO, ERC2/CAST1, RIMS1 and UNC13A. Interacts with TPRG1L. Interacts with DYNLL1 and DYNLL2; these interactions potentially link PTVs to dynein and myosin V motor complexes. Interacts with ATG5; this interaction is important for the regulation of presynaptic autophagy. Interacts (via C-terminus) with TRIO (via N-terminus). Interacts with CTBP1. Interacts with SIAH1; this interaction negatively regulates SIAH1 E3 ligase activity. Interacts (via coiled region) with DAO; the interaction is direct. In terms of processing, myristoylated. The N-terminal myristoylation is not sufficient for presynaptic localization. As to expression, expressed in brain and retina.

It localises to the cytoplasm. It is found in the presynaptic active zone. The protein localises to the cytoskeleton. Its subcellular location is the cytoplasmic vesicle. The protein resides in the secretory vesicle. It localises to the synaptic vesicle membrane. Scaffold protein of the presynaptic cytomatrix at the active zone (CAZ) which is the place in the synapse where neurotransmitter is released. After synthesis, participates in the formation of Golgi-derived membranous organelles termed Piccolo-Bassoon transport vesicles (PTVs) that are transported along axons to sites of nascent synaptic contacts. At the presynaptic active zone, regulates the spatial organization of synaptic vesicle cluster, the protein complexes that execute membrane fusion and compensatory endocytosis. Also functions in processes other than assembly such as the regulation of specific presynaptic protein ubiquitination by interacting with SIAH1 or the regulation of presynaptic autophagy by associating with ATG5. Also mediates synapse to nucleus communication leading to reconfiguration of gene expression by associating with the transcriptional corepressor CTBP1 and by subsequently reducing the size of its pool available for nuclear import. Inhibits the activity of the proportion of DAO enzyme that localizes to the presynaptic active zone, which may modulate synaptic transmission. The chain is Protein bassoon from Mus musculus (Mouse).